The sequence spans 111 residues: Large ribosomal subunit protein uL24 (111 aa).

This sequence belongs to the universal ribosomal protein uL24 family. In terms of assembly, part of the 50S ribosomal subunit.

Its function is as follows. One of two assembly initiator proteins, it binds directly to the 5'-end of the 23S rRNA, where it nucleates assembly of the 50S subunit. In terms of biological role, one of the proteins that surrounds the polypeptide exit tunnel on the outside of the subunit. The protein is Large ribosomal subunit protein uL24 of Chlamydia pneumoniae (Chlamydophila pneumoniae).